The chain runs to 1611 residues: SH3 domain-containing protein C23A1.17 (1611 aa).

One can recognise an SH3 domain in the interval 3–67 (SFPTRVVALY…PKDFTEPAED (65 aa)). 4 disordered regions span residues 275-648 (THPA…PTSL), 662-741 (IDPP…PPGL), 762-851 (AVPR…NSLN), and 886-1365 (TPST…FSAK). Polar residues predominate over residues 278–296 (AASSTMATESSHQSPSADS). Basic and acidic residues predominate over residues 300–312 (ELSKSQRVAKDDD). Over residues 316-330 (VSNTANSDEPASSSK) the composition is skewed to polar residues. Composition is skewed to acidic residues over residues 361-373 (SEQE…DAES) and 387-420 (SEPE…QIDP). Positions 421–433 (EEAKRIALRERMA) are enriched in basic and acidic residues. Over residues 472-494 (STTNDSSPPKDSSSTSTQPTEQS) the composition is skewed to low complexity. Polar residues predominate over residues 576–586 (TQETSEQQVHK). Residues 605-619 (FDKETLASNEAHEAV) are compositionally biased toward basic and acidic residues. Low complexity predominate over residues 637–648 (SSSVVTPSPTSL). Polar residues-rich tracts occupy residues 799 to 808 (SRPSTGSQLR), 886 to 902 (TPST…SNVA), and 923 to 940 (ATHQ…QLGS). Composition is skewed to pro residues over residues 963–974 (PAAPPSIPPPLP), 1022–1053 (PPVP…PPVP), and 1076–1241 (IPAP…PVPA). Over residues 1242 to 1278 (PSSEAPSVSTPRSSVPSPHSNASPSPTSSSMASAAPA) the composition is skewed to low complexity. A phosphoserine mark is found at Ser-1258, Ser-1261, and Ser-1266. Basic residues predominate over residues 1300–1312 (KSSKSGEHHHHHN). The segment covering 1317–1327 (DSSSTRTSLAH) has biased composition (polar residues). The segment covering 1340–1350 (RSSSRASKKPS) has biased composition (low complexity). Over residues 1351–1362 (IVSTTGPFNESF) the composition is skewed to polar residues. A Phosphoserine modification is found at Ser-1379. Phosphothreonine is present on Thr-1380.

Its subcellular location is the cytoplasm. The protein is SH3 domain-containing protein C23A1.17 of Schizosaccharomyces pombe (strain 972 / ATCC 24843) (Fission yeast).